A 103-amino-acid polypeptide reads, in one-letter code: Large ribosomal subunit protein bL21 (103 aa).

The protein belongs to the bacterial ribosomal protein bL21 family. Part of the 50S ribosomal subunit. Contacts protein L20.

This protein binds to 23S rRNA in the presence of protein L20. The polypeptide is Large ribosomal subunit protein bL21 (Clostridium kluyveri (strain NBRC 12016)).